Reading from the N-terminus, the 699-residue chain is Elongation factor G (699 aa).

The tr-type G domain maps to 8–288 (EDYRNFGIMA…AVVDYLPSPM (281 aa)). Residues 17–24 (AHIDAGKT), 86–90 (DTPGH), and 140–143 (NKMD) each bind GTP.

The protein belongs to the TRAFAC class translation factor GTPase superfamily. Classic translation factor GTPase family. EF-G/EF-2 subfamily.

It is found in the cytoplasm. Its function is as follows. Catalyzes the GTP-dependent ribosomal translocation step during translation elongation. During this step, the ribosome changes from the pre-translocational (PRE) to the post-translocational (POST) state as the newly formed A-site-bound peptidyl-tRNA and P-site-bound deacylated tRNA move to the P and E sites, respectively. Catalyzes the coordinated movement of the two tRNA molecules, the mRNA and conformational changes in the ribosome. The protein is Elongation factor G of Rhizobium leguminosarum bv. trifolii (strain WSM2304).